We begin with the raw amino-acid sequence, 143 residues long: Large ribosomal subunit protein uL13 (143 aa).

This sequence belongs to the universal ribosomal protein uL13 family. In terms of assembly, part of the 50S ribosomal subunit.

This protein is one of the early assembly proteins of the 50S ribosomal subunit, although it is not seen to bind rRNA by itself. It is important during the early stages of 50S assembly. The chain is Large ribosomal subunit protein uL13 from Thermoanaerobacter pseudethanolicus (strain ATCC 33223 / 39E) (Clostridium thermohydrosulfuricum).